Consider the following 1730-residue polypeptide: Nebulin-related-anchoring protein (1730 aa).

An LIM zinc-binding domain is found at Gln4–Phe64. Nebulin repeat units follow at residues Thr63–Ser97, Glu156–Gly166, Thr175–Ser202, Arg203–Gly237, Thr246–Arg273, Tyr298–Gly307, Thr316–Gly343, His348–Gly382, Glu389–Arg417, Arg419–Val453, Lys487–Leu521, Asn522–Gly556, Gly558–Gly592, Leu602–Thr626, Arg627–Val661, Leu662–Gly692, Asn702–Glu724, Lys726–His760, Gln761–Ala795, Gly797–Gly831, Gln844–Ser869, Gln870–Lys896, His901–Gly935, Asn945–Gln963, Lys969–His1003, His1004–Asp1038, Gly1040–Gly1074, Gly1078–Ala1112, Gln1113–Lys1139, Gln1144–Gly1178, Ile1183–Gln1206, Lys1212–His1246, Glu1247–Ala1281, Gly1283–Gly1317, Gly1321–Ala1355, Gln1356–Ala1390, Leu1391–Gly1421, Ser1429–Lys1449, Lys1455–Arg1481, Arg1490–Ala1524, Ser1526–Gly1560, Gly1564–Ser1598, Gln1599–Gln1626, and Leu1640–Gly1664. A Phosphoserine modification is found at Ser1081. The segment at Lys1595–Ser1620 is disordered. Polar residues predominate over residues Ser1596–Gln1606.

Interacts with actin, alpha-actinin, KLHL41, TLN1 and VCL. Interacts with CSRP3. Expressed in cardiac and skeletal muscle.

May be involved in anchoring the terminal actin filaments in the myofibril to the membrane and in transmitting tension from the myofibrils to the extracellular matrix. This chain is Nebulin-related-anchoring protein, found in Homo sapiens (Human).